A 226-amino-acid polypeptide reads, in one-letter code: Cytidylate kinase (226 aa).

Position 10-18 (10-18 (GPASSGKST)) interacts with ATP.

This sequence belongs to the cytidylate kinase family. Type 1 subfamily.

The protein localises to the cytoplasm. The catalysed reaction is CMP + ATP = CDP + ADP. It carries out the reaction dCMP + ATP = dCDP + ADP. This chain is Cytidylate kinase, found in Streptococcus thermophilus (strain CNRZ 1066).